The primary structure comprises 216 residues: Regulatory protein RecX (216 aa).

The protein belongs to the RecX family.

The protein resides in the cytoplasm. Modulates RecA activity. The protein is Regulatory protein RecX of Clostridium tetani (strain Massachusetts / E88).